The following is a 346-amino-acid chain: 3-keto-steroid reductase (346 aa).

NADP(+)-binding residues include leucine 16, threonine 39, and arginine 45. Catalysis depends on proton donor residues serine 178 and tyrosine 201. NADP(+) contacts are provided by tyrosine 201, lysine 205, and serine 236. Residue lysine 205 is the Lowers pKa of active site Tyr of the active site.

The protein belongs to the short-chain dehydrogenases/reductases (SDR) family. ERG27 subfamily.

The enzyme catalyses a 3beta-hydroxysteroid + NADP(+) = a 3-oxosteroid + NADPH + H(+). Its pathway is steroid biosynthesis; zymosterol biosynthesis; zymosterol from lanosterol: step 5/6. Its function is as follows. Responsible for the reduction of the keto group on the C-3 of sterols. This chain is 3-keto-steroid reductase (ERG27), found in Kluyveromyces lactis (strain ATCC 8585 / CBS 2359 / DSM 70799 / NBRC 1267 / NRRL Y-1140 / WM37) (Yeast).